The sequence spans 301 residues: Ribosomal protein L11 methyltransferase (301 aa).

Positions 146, 167, 189, and 237 each coordinate S-adenosyl-L-methionine.

The protein belongs to the methyltransferase superfamily. PrmA family.

It localises to the cytoplasm. It carries out the reaction L-lysyl-[protein] + 3 S-adenosyl-L-methionine = N(6),N(6),N(6)-trimethyl-L-lysyl-[protein] + 3 S-adenosyl-L-homocysteine + 3 H(+). Methylates ribosomal protein L11. In Prochlorococcus marinus (strain MIT 9303), this protein is Ribosomal protein L11 methyltransferase.